Reading from the N-terminus, the 240-residue chain is Tetrahydromethanopterin S-methyltransferase subunit A (240 aa).

At methionine 1–lysine 218 the chain is on the cytoplasmic side. A 5-hydroxybenzimidazolylcob(I)amide-binding site is contributed by histidine 85. Residues isoleucine 219–glycine 239 traverse the membrane as a helical segment. Position 240 (arginine 240) is a topological domain, extracellular.

Belongs to the MtrA family. As to quaternary structure, the complex is composed of 8 subunits; MtrA, MtrB, MtrC, MtrD, MtrE, MtrF, MtrG and MtrH. Requires 5-hydroxybenzimidazolylcob(I)amide as cofactor.

The protein resides in the cell membrane. It carries out the reaction 5-methyl-5,6,7,8-tetrahydromethanopterin + coenzyme M + 2 Na(+)(in) = 5,6,7,8-tetrahydromethanopterin + methyl-coenzyme M + 2 Na(+)(out). Its pathway is one-carbon metabolism; methanogenesis from CO(2); methyl-coenzyme M from 5,10-methylene-5,6,7,8-tetrahydromethanopterin: step 2/2. Functionally, part of a complex that catalyzes the formation of methyl-coenzyme M and tetrahydromethanopterin from coenzyme M and methyl-tetrahydromethanopterin. This is an energy-conserving, sodium-ion translocating step. The protein is Tetrahydromethanopterin S-methyltransferase subunit A of Methanosarcina acetivorans (strain ATCC 35395 / DSM 2834 / JCM 12185 / C2A).